The chain runs to 478 residues: Chromosomal replication initiator protein DnaA (478 aa).

Residues 1-71 (MKEFWQTCVS…EALAAEWFQR (71 aa)) are domain I, interacts with DnaA modulators. The segment at 71-140 (RPVQVAFELP…DAAGVVYERS (70 aa)) is domain II. Positions 141–357 (RLNTDLTFDN…GALRKVLAYA (217 aa)) are domain III, AAA+ region. Gly185, Gly187, Lys188, and Thr189 together coordinate ATP. Positions 358-478 (RFHGRDVLSV…LHVLEQTLKG (121 aa)) are domain IV, binds dsDNA.

Belongs to the DnaA family. As to quaternary structure, oligomerizes as a right-handed, spiral filament on DNA at oriC.

It is found in the cytoplasm. Functionally, plays an essential role in the initiation and regulation of chromosomal replication. ATP-DnaA binds to the origin of replication (oriC) to initiate formation of the DNA replication initiation complex once per cell cycle. Binds the DnaA box (a 9 base pair repeat at the origin) and separates the double-stranded (ds)DNA. Forms a right-handed helical filament on oriC DNA; dsDNA binds to the exterior of the filament while single-stranded (ss)DNA is stabiized in the filament's interior. The ATP-DnaA-oriC complex binds and stabilizes one strand of the AT-rich DNA unwinding element (DUE), permitting loading of DNA polymerase. After initiation quickly degrades to an ADP-DnaA complex that is not apt for DNA replication. Binds acidic phospholipids. The sequence is that of Chromosomal replication initiator protein DnaA from Bordetella petrii (strain ATCC BAA-461 / DSM 12804 / CCUG 43448).